The primary structure comprises 125 residues: MGVMWGLISVAIASLAQLSLGFAMMRLPSIAHPLAFISGLGAFNAATLALFAGLAGYLVSVFCWQKTLHMLALSKAYALLSLSYVLVWVASMLLPGLQGAFSLKAMLGVLCIMAGVMLIFLPARS.

Topologically, residues 1 to 2 (MG) are cytoplasmic. The helical transmembrane segment at 3–23 (VMWGLISVAIASLAQLSLGFA) threads the bilayer. At 24–33 (MMRLPSIAHP) the chain is on the periplasmic side. The helical transmembrane segment at 34 to 54 (LAFISGLGAFNAATLALFAGL) threads the bilayer. The Cytoplasmic portion of the chain corresponds to 55–76 (AGYLVSVFCWQKTLHMLALSKA). The chain crosses the membrane as a helical span at residues 77 to 97 (YALLSLSYVLVWVASMLLPGL). Over 98–100 (QGA) the chain is Periplasmic. A helical transmembrane segment spans residues 101–121 (FSLKAMLGVLCIMAGVMLIFL). Topologically, residues 122–125 (PARS) are cytoplasmic.

It belongs to the ArnF family. In terms of assembly, heterodimer of ArnE and ArnF.

Its subcellular location is the cell inner membrane. It functions in the pathway bacterial outer membrane biogenesis; lipopolysaccharide biosynthesis. Its function is as follows. Translocates 4-amino-4-deoxy-L-arabinose-phosphoundecaprenol (alpha-L-Ara4N-phosphoundecaprenol) from the cytoplasmic to the periplasmic side of the inner membrane. The sequence is that of Probable 4-amino-4-deoxy-L-arabinose-phosphoundecaprenol flippase subunit ArnF from Salmonella paratyphi A (strain ATCC 9150 / SARB42).